We begin with the raw amino-acid sequence, 200 residues long: UPF0637 protein LCK_01372 (200 aa).

This sequence belongs to the UPF0637 family.

The polypeptide is UPF0637 protein LCK_01372 (Leuconostoc citreum (strain KM20)).